The following is a 118-amino-acid chain: Basic phospholipase A2 PA-12A (118 aa).

Intrachain disulfides connect Cys-11/Cys-71, Cys-27/Cys-117, Cys-29/Cys-45, Cys-44/Cys-98, Cys-51/Cys-91, Cys-60/Cys-84, and Cys-78/Cys-89. Tyr-28, Gly-30, and Gly-32 together coordinate Ca(2+). His-48 is an active-site residue. Asp-49 serves as a coordination point for Ca(2+). Asp-92 is a catalytic residue.

Belongs to the phospholipase A2 family. Group I subfamily. D49 sub-subfamily. It depends on Ca(2+) as a cofactor. Expressed by the venom gland.

The protein resides in the secreted. It carries out the reaction a 1,2-diacyl-sn-glycero-3-phosphocholine + H2O = a 1-acyl-sn-glycero-3-phosphocholine + a fatty acid + H(+). Its function is as follows. PLA2 catalyzes the calcium-dependent hydrolysis of the 2-acyl groups in 3-sn-phosphoglycerides. This is Basic phospholipase A2 PA-12A from Pseudechis australis (Mulga snake).